Consider the following 88-residue polypeptide: UPF0213 protein SAG0778 (88 aa).

The GIY-YIG domain maps to 4–80 (VPAYMYVLEC…QKTRQAKLTY (77 aa)).

The protein belongs to the UPF0213 family.

This chain is UPF0213 protein SAG0778, found in Streptococcus agalactiae serotype V (strain ATCC BAA-611 / 2603 V/R).